The chain runs to 1537 residues: Adhesion G protein-coupled receptor L3 (1537 aa).

The first 19 residues, 1–19 (MWPPQLLILTMLLAPVVHG), serve as a signal peptide directing secretion. Topologically, residues 20 to 943 (GKHNERHPAL…VKHSDAVHDL (924 aa)) are extracellular. Positions 53 to 80 (PAAERSTAHRGQGPRGAARGVRGPGAPG) are disordered. One can recognise an SUEL-type lectin domain in the interval 103 to 192 (SCESYPIELR…KYLEVQYECV (90 aa)). Disulfide bonds link Cys-104-Cys-134, Cys-113-Cys-191, Cys-146-Cys-178, Cys-159-Cys-165, and Cys-203-Cys-385. A glycan (N-linked (GlcNAc...) asparagine) is linked at Asn-161. The region spanning 202 to 461 (LCPGLLKGVY…VVKYSLDFGP (260 aa)) is the Olfactomedin-like domain. An interaction with FLRT3 region spans residues 317 to 347 (YHDTSPYRWGGKSDIDLAVDENGLWVIYATE). The Ca(2+) site is built by Asp-332, Asn-380, Ala-381, and Val-435. The disordered stretch occupies residues 521 to 540 (RSTTASLPGRRNRSTSTPSP). 6 N-linked (GlcNAc...) asparagine glycosylation sites follow: Asn-532, Asn-617, Asn-827, Asn-840, Asn-885, and Asn-911. The region spanning 756 to 935 (DIVRENTDNI…AVLMAHVEVK (180 aa)) is the GAIN-B domain. Intrachain disulfides connect Cys-886/Cys-917 and Cys-905/Cys-919. A GPS region spans residues 886-935 (CSFWSYSKRTMTGYWSTQGCRLLTTNKTHTTCSCNHLTNFAVLMAHVEVK). Positions 923 to 939 (TNFAVLMAHVEVKHSDA) are stachel. Residues 944–969 (LLDVITWVGILLSLVCLLICIFTFCF) form a helical membrane-spanning segment. Over 970–975 (FRGLQS) the chain is Cytoplasmic. The helical transmembrane segment at 976 to 999 (DRNTIHKNLCISLFVAELLFLIGI) threads the bilayer. Asn-1000 is a glycosylation site (N-linked (GlcNAc...) asparagine). The Extracellular segment spans residues 1000-1006 (NRTDQPI). A helical membrane pass occupies residues 1007–1034 (ACAVFAALLHFFFLAAFTWMFLEGVQLY). Residues Cys-1008 and Cys-1080 are joined by a disulfide bond. Residues 1035–1048 (IMLVEVFESEHSRR) are Cytoplasmic-facing. Residues 1049-1071 (KYFYLVGYGMPALIVAVSAAVDY) form a helical membrane-spanning segment. The Extracellular segment spans residues 1072-1086 (RSYGTDKVCWLRLDT). The helical transmembrane segment at 1087-1112 (YFIWSFIGPATLIIMLNVIFLGIALY) threads the bilayer. The Cytoplasmic portion of the chain corresponds to 1113 to 1142 (KMFHHTAILKPESGCLDNINYEDNRPFIKS). The helical transmembrane segment at 1143–1163 (WVIGAIALLCLLGLTWAFGLM) threads the bilayer. Over 1164–1168 (YINES) the chain is Extracellular. A glycan (N-linked (GlcNAc...) asparagine) is linked at Asn-1166. A helical transmembrane segment spans residues 1169 to 1195 (TVIMAYLFTIFNSLQGMFIFIFHCVLQ). Residues 1196–1537 (KKVRKEYGKC…KGPAHLVTSL (342 aa)) lie on the Cytoplasmic side of the membrane. Positions 1213 to 1237 (GKSTESSIGSGKTSGSRTPGRYSTG) are disordered. Phosphoserine occurs at positions 1254 and 1522. The tract at residues 1512 to 1537 (FIVPPNKDGASPEGTSKGPAHLVTSL) is disordered. Residues 1532–1537 (HLVTSL) carry the PDZ-binding motif.

The protein belongs to the G-protein coupled receptor 2 family. LN-TM7 subfamily. Heterodimer of 2 chains generated by proteolytic processing; the large extracellular N-terminal fragment and the membrane-bound C-terminal fragment predominantly remain associated and non-covalently linked. Interacts (via olfactomedin-like domain) with FLRT1 (via extracellular domain). Interacts (via olfactomedin-like domain) with FLRT2 (via extracellular domain). Interacts (via olfactomedin-like domain) with FLRT3 (via extracellular domain); the interaction is direct. Interacts (via extracellular domain) with TENM1. Interacts (via extracellular domain) with TENM2. Interacts (via extracellular domain) with TENM3. Identified in a complex with FLRT3 and UNC5B; does not interact with UNC5B by itself. Identified in a complex with FLRT3 and UNC5D; does not interact with UNC5D by itself. As to quaternary structure, interacts (via PDZ-binding motif) with SHANK3. Interacts (via PDZ-binding motif) with DLG4. In terms of processing, autoproteolytically processed at the GPS region of the GAIN-B domain; this cleavage modulates receptor activity. O-glycosylated (major) and N-glycosylated. In terms of tissue distribution, localizes to postsynaptic spines in non-overlapping dendritic domains of CA1-region pyramidal neurons: specifically localizes to excitatory synapses in the S.oriens and S.radiatum, corresponding to distinct presynaptic inputs onto CA1-region pyramidal neurons.

It is found in the cell membrane. Its subcellular location is the postsynaptic cell membrane. The protein resides in the cell projection. The protein localises to the axon. It localises to the cell junction. Its activity is regulated as follows. Forms a heterodimer of 2 chains generated by proteolytic processing that remain associated through non-covalent interactions mediated by the GAIN-B domain. In the inactivated receptor, the Stachel sequence (also named stalk) is embedded in the GAIN-B domain, where it adopts a beta-strand conformation. On activation, the Stachel moves into the 7 transmembrane region and adopts a twisted hook-shaped configuration that forms contacts within the receptor, leading to coupling of a G-alpha protein, which activates signaling. The cleaved GAIN-B and N-terminal domains can then dissociate from the rest of the receptor. Functionally, orphan adhesion G-protein coupled receptor (aGPCR), which mediates synapse specificity. Ligand binding causes a conformation change that triggers signaling via guanine nucleotide-binding proteins (G proteins) and modulates the activity of downstream effectors. ADGRL3 is coupled with different classes of G alpha proteins, such as G(12)/G(13), G(s), G(i) or G(q), depending on the context. Coupling to G(12)/G(13) G proteins, which mediates the activation Rho small GTPases is the most efficient. Following G-protein coupled receptor activation, associates with cell adhesion molecules that are expressed at the surface of adjacent cells to direct synapse specificity. Specifically mediates the establishment of Schaffer-collateral synapses formed by CA3-region axons on CA1-region pyramidal neurons in the hippocampus. Localizes to postsynaptic spines in excitatory synapses in the S.oriens and S.radiatum and interacts with presynaptic cell adhesion molecules FLRT3 and TENM2, promoting synapse formation. Plays a role in the development of glutamatergic synapses in the cortex. Important in determining the connectivity rates between the principal neurons in the cortex. In terms of biological role, orphan adhesion G-protein coupled receptor (aGPCR), which mediates synapse specificity. Ligand binding causes a conformation change that triggers signaling via guanine nucleotide-binding proteins (G proteins) and modulates the activity of downstream effectors, such as adenylate cyclase. Isoform 1 is specifically coupled to G(s) G proteins and mediates activation of adenylate cyclase activity. Following G-protein coupled receptor activation, undergoes liquid-liquid phase transition, associates with (1) cell adhesion molecules that are expressed at the surface of adjacent cells, as well as (2) PDZ-containing proteins, such as SHANK3 and DLG4, in the cytoplasm to direct synapse formation. Orphan adhesion G-protein coupled receptor (aGPCR). Ligand binding causes a conformation change that triggers signaling via guanine nucleotide-binding proteins (G proteins) and modulates the activity of downstream effectors, such as RhoA pathway. Isoform 7 is coupled to G(12) and/or G(13) G proteins (GNA12 and GNA13, respectively) and mediates the activation Rho small GTPases. In Mus musculus (Mouse), this protein is Adhesion G protein-coupled receptor L3.